Here is a 314-residue protein sequence, read N- to C-terminus: MAGGSEKSVFLKWSWFLEWLTPDRATLKHIEDVIFQGRSRFQEIAVVRVSGEGKVLVLDGKTQSSESDEFMYHEALVHPAMILHGSPRKVLILGGGEGATLREVLKHRSVEKAVMVDIDETVVNVAREHLREWHRGAFDDPRAEVVIDDAWNYVASKAETGFDVVIADLVDPLEAGPATRLYSEEYYRMVKDVMNPGGVFVTQAVSISHLTEYHAIIRNTVARVFKHVESYGVYVPSFDSMWGFVVASDDKDPRILGDRGFFETRLSHQLQGAELRFLDYASMLHMLNIPKMYREAIAREKRYATLDNQVFLPA.

A PABS domain is found at 13–249 (WSWFLEWLTP…SMWGFVVASD (237 aa)). Gln-42 is an S-methyl-5'-thioadenosine binding site. Spermidine is bound by residues His-73 and Glu-97. S-methyl-5'-thioadenosine-binding positions include Asp-117 and 149–150 (DA). The Proton acceptor role is filled by Asp-168. An S-methyl-5'-thioadenosine-binding site is contributed by Pro-177.

It belongs to the spermidine/spermine synthase family. In terms of assembly, homodimer or homotetramer.

The protein localises to the cytoplasm. It carries out the reaction S-adenosyl 3-(methylsulfanyl)propylamine + putrescine = S-methyl-5'-thioadenosine + spermidine + H(+). Its pathway is amine and polyamine biosynthesis; spermidine biosynthesis; spermidine from putrescine: step 1/1. In terms of biological role, catalyzes the irreversible transfer of a propylamine group from the amino donor S-adenosylmethioninamine (decarboxy-AdoMet) to putrescine (1,4-diaminobutane) to yield spermidine. This is Polyamine aminopropyltransferase from Aeropyrum pernix (strain ATCC 700893 / DSM 11879 / JCM 9820 / NBRC 100138 / K1).